A 195-amino-acid chain; its full sequence is Imidazoleglycerol-phosphate dehydratase (195 aa).

This sequence belongs to the imidazoleglycerol-phosphate dehydratase family.

It is found in the cytoplasm. The catalysed reaction is D-erythro-1-(imidazol-4-yl)glycerol 3-phosphate = 3-(imidazol-4-yl)-2-oxopropyl phosphate + H2O. The protein operates within amino-acid biosynthesis; L-histidine biosynthesis; L-histidine from 5-phospho-alpha-D-ribose 1-diphosphate: step 6/9. This Dinoroseobacter shibae (strain DSM 16493 / NCIMB 14021 / DFL 12) protein is Imidazoleglycerol-phosphate dehydratase.